The sequence spans 623 residues: MSKILGIDLGTSNSEAAIMEGGKPVIIPSAEGARMFPSVVAFTKTGERLVGEAARRQAVTNPERTIIAIKRKMGTDYKVEIDGKKYTPQEISAMILQKIKQDAEAYIGEKITKAVITVPAYFNDNQRQATKDAGTIAGLEVLRVINEPTAAALAFGLDKKGSQKILVFDLGGGTLDVTIMEMGDGVFEVLSTSGDTQLGGTDMDNKIIDYIASQFKKDTGIDLRNDKMAMQRLRDAAEKAKIELSSTLQTQVNLPFITADASGPKHLDMMLTRATLEELVREVVERCYAPMRQAISDAKLTANQIDRIILVGGPTRMPIIIETIKKFFGKEPERGIDPMECVAMGASIQGGVLAGEVKDLLLLDVTPLSLGIETLGNVATRLIERNTTIPTRKSQVFSTAADNQTSVEIHVIQGERPMAYDNTTLGRFHLIGIPPAPRGIPQIEVTFDIDANGILNVKAKDLGTGKEQAITITASTKLDKSDIERMVKDAEKFAAEDAAKKEKAEVMNQADTLLYSAEKTLADAGDKITADQKERVTKGSDALREAQKTGDIEKIKAATADLTKTMNEVATVLYQAAQQQYQQQQAAEQAAQQQSGGQQASGSNPGKDPNVVDADYEVVNDKK.

Positions 582–603 (QQQQAAEQAAQQQSGGQQASGS) are enriched in low complexity. The interval 582 to 623 (QQQQAAEQAAQQQSGGQQASGSNPGKDPNVVDADYEVVNDKK) is disordered. A compositionally biased stretch (acidic residues) spans 614 to 623 (ADYEVVNDKK).

The protein belongs to the heat shock protein 70 family.

Functionally, acts as a chaperone. This chain is Chaperone protein DnaK, found in Methanocella arvoryzae (strain DSM 22066 / NBRC 105507 / MRE50).